We begin with the raw amino-acid sequence, 363 residues long: Probable cinnamyl alcohol dehydrogenase 6 (363 aa).

A Zn(2+)-binding site is contributed by Cys51. Position 53 (Ser53) interacts with NADP(+). Zn(2+)-binding residues include His73, Glu74, Cys104, Cys107, Cys110, Cys118, and Cys167. NADP(+) contacts are provided by residues Ser171, 192–197 (GLGGLG), 215–220 (SSTTGK), Thr255, Gly279, and 302–304 (SGI).

This sequence belongs to the zinc-containing alcohol dehydrogenase family. As to quaternary structure, homodimer. It depends on Zn(2+) as a cofactor. In terms of tissue distribution, expressed in the primary and lateral roots, and root caps. Expressed in the hypocotyl, cotyledon veins and hydathodes. In stems, expressed in the vascular cambium, interfascicular cambium and developing xylem. Expressed in the style, anthers, stamen filaments, vascular tissues of sepals, stigmatic regions in flowers, and abscission and style regions of siliques.

It carries out the reaction (E)-cinnamyl alcohol + NADP(+) = (E)-cinnamaldehyde + NADPH + H(+). The catalysed reaction is (E)-coniferol + NADP(+) = (E)-coniferaldehyde + NADPH + H(+). The enzyme catalyses (E)-sinapyl alcohol + NADP(+) = (E)-sinapaldehyde + NADPH + H(+). It catalyses the reaction (E)-4-coumaroyl alcohol + NADP(+) = (E)-4-coumaraldehyde + NADPH + H(+). It carries out the reaction (E)-caffeyl alcohol + NADP(+) = (E)-caffeyl aldehyde + NADPH + H(+). It functions in the pathway aromatic compound metabolism; phenylpropanoid biosynthesis. Its function is as follows. Involved in lignin biosynthesis. Catalyzes the final step specific for the production of lignin monomers. Catalyzes the NADPH-dependent reduction of coniferaldehyde, 5-hydroxyconiferaldehyde, sinapaldehyde, 4-coumaraldehyde and caffeyl aldehyde to their respective alcohols. In Arabidopsis thaliana (Mouse-ear cress), this protein is Probable cinnamyl alcohol dehydrogenase 6 (CAD6).